The chain runs to 260 residues: Putative ABC transporter ATP-binding protein PF0068 (260 aa).

Residues 2-234 (IEVKGVWFWY…DLKRYKLEEP (233 aa)) enclose the ABC transporter domain. Position 34-41 (34-41 (GPNGSGKT)) interacts with ATP.

This sequence belongs to the ABC transporter superfamily.

The protein localises to the cell membrane. Its function is as follows. Probably part of an ABC transporter complex. Responsible for energy coupling to the transport system. This Pyrococcus furiosus (strain ATCC 43587 / DSM 3638 / JCM 8422 / Vc1) protein is Putative ABC transporter ATP-binding protein PF0068.